We begin with the raw amino-acid sequence, 399 residues long: MRCDRLWRDARLATMAGNGLGIVEDGVVAASEGRILYAGPAADAPAFDPDRAETLDGRWITPGLIDCHTHLVHAGDRAREFELRLAGASYEEIARAGGGIVSTMRATRDADEARLVELALPRLDALIAEGATTVEVKSGYGLTVADELKMLRAARRLGEARPVGIRATLLGAHALPPEYAGDADGYVDLVCREMIPAAAREGLADAVDAFCEGIGFTPAQTQRVFDAARAAGLPVKLHAEQLSNLHGAKLAAEAGALSADHLEHLDADGIAAMARAGTVATLLPGAYYFVRETKLPPVDGLRAAGVPIAIATDCNPGTSPLSSLLLTMNMGATLFRLTVDECLAGVTRNAARALGLQAEIGTLEPGKSCDLAIWDIERPAELVYRIGFNPLHTRIWKGL.

Fe(3+)-binding residues include histidine 68 and histidine 70. Histidine 68 and histidine 70 together coordinate Zn(2+). 4-imidazolone-5-propanoate is bound by residues arginine 77, tyrosine 140, and histidine 173. Tyrosine 140 is an N-formimidoyl-L-glutamate binding site. Fe(3+) is bound at residue histidine 238. Histidine 238 provides a ligand contact to Zn(2+). Glutamine 241 is a 4-imidazolone-5-propanoate binding site. Fe(3+) is bound at residue aspartate 313. Residue aspartate 313 coordinates Zn(2+). Positions 315 and 317 each coordinate N-formimidoyl-L-glutamate. Residue threonine 318 coordinates 4-imidazolone-5-propanoate.

Belongs to the metallo-dependent hydrolases superfamily. HutI family. Zn(2+) serves as cofactor. The cofactor is Fe(3+).

It localises to the cytoplasm. It catalyses the reaction 4-imidazolone-5-propanoate + H2O = N-formimidoyl-L-glutamate. Its pathway is amino-acid degradation; L-histidine degradation into L-glutamate; N-formimidoyl-L-glutamate from L-histidine: step 3/3. Functionally, catalyzes the hydrolytic cleavage of the carbon-nitrogen bond in imidazolone-5-propanoate to yield N-formimidoyl-L-glutamate. It is the third step in the universal histidine degradation pathway. This is Imidazolonepropionase from Rhizorhabdus wittichii (strain DSM 6014 / CCUG 31198 / JCM 15750 / NBRC 105917 / EY 4224 / RW1) (Sphingomonas wittichii).